The following is a 426-amino-acid chain: 3-phosphoshikimate 1-carboxyvinyltransferase (426 aa).

Lys22, Ser23, and Arg27 together coordinate 3-phosphoshikimate. Lys22 contacts phosphoenolpyruvate. Phosphoenolpyruvate-binding residues include Gly96 and Arg124. 3-phosphoshikimate contacts are provided by Ser170, Ser171, Gln172, Ser198, Asp314, Asn337, and Lys341. Residue Gln172 participates in phosphoenolpyruvate binding. The active-site Proton acceptor is the Asp314. Phosphoenolpyruvate is bound by residues Arg345, Arg387, and Lys412.

The protein belongs to the EPSP synthase family. In terms of assembly, monomer.

It is found in the cytoplasm. It catalyses the reaction 3-phosphoshikimate + phosphoenolpyruvate = 5-O-(1-carboxyvinyl)-3-phosphoshikimate + phosphate. Its pathway is metabolic intermediate biosynthesis; chorismate biosynthesis; chorismate from D-erythrose 4-phosphate and phosphoenolpyruvate: step 6/7. Catalyzes the transfer of the enolpyruvyl moiety of phosphoenolpyruvate (PEP) to the 5-hydroxyl of shikimate-3-phosphate (S3P) to produce enolpyruvyl shikimate-3-phosphate and inorganic phosphate. This Shewanella oneidensis (strain ATCC 700550 / JCM 31522 / CIP 106686 / LMG 19005 / NCIMB 14063 / MR-1) protein is 3-phosphoshikimate 1-carboxyvinyltransferase.